The following is a 457-amino-acid chain: Interferon regulatory factor 7 (457 aa).

A DNA-binding region (IRF tryptophan pentad repeat) is located at residues 9-126 (RVLFGDWLLG…DPHKVYELSR (118 aa)). At lysine 92 the chain carries N6-acetyllysine; by KAT2A and KAT2B. The necessary for the interaction with NMI stretch occupies residues 238–410 (RSLGFLDVTI…TLILVKLEPW (173 aa)). Lysine 329 is covalently cross-linked (Glycyl lysine isopeptide (Lys-Gly) (interchain with G-Cter in ubiquitin)). Glycyl lysine isopeptide (Lys-Gly) (interchain with G-Cter in SUMO) cross-links involve residues lysine 398 and lysine 400. A phosphoserine mark is found at serine 425, serine 426, and serine 429. At serine 431 the chain carries Phosphoserine; by TBK1 and IKKE. Phosphoserine occurs at positions 437, 438, and 441.

It belongs to the IRF family. Monomer. Homodimer; phosphorylation-induced. Heterodimer with IRF3. Interacts with TICAM1 and TICAM2. Interacts with MYD88 and TRAF6. Interacts with NMI; the interaction is direct and leads to the inhibition of IRF7-mediated type I IFN production. Interacts with GBP4; preventing interaction between TRAF6 and IRF7, resulting in impaired TRAF6-mediated IRF7 ubiquitination. Interacts with TARBP2; this interaction prevents IRF7 phosphorylation and activation. In terms of processing, acetylation inhibits its DNA-binding ability and activity. In response to a viral infection, phosphorylated by TBK1 and IKBKE1. Phosphorylation, and subsequent activation is inhibited by vaccinia virus protein E3. In TLR7- and TLR9-mediated signaling pathway, phosphorylated by IRAK1. Post-translationally, TRAF6-mediated ubiquitination is required for IRF7 activation. TRIM35 mediates IRF7 'Lys-48'-linked polyubiquitination and subsequent proteasomal degradation. 'Lys-48'-linked polyubiquitination and subsequent proteasomal degradation is NMI-dependent in response to Sendai virus infection. Ubiquitinated by UBE3C, leading to its degradation. In terms of processing, sumoylated by TRIM28, which inhibits its transactivation activity. 'Lys-63'-linked ubiquitination by NEURL3 promotes IRF7 activation.

Its subcellular location is the nucleus. It is found in the cytoplasm. With respect to regulation, in the absence of viral infection, maintained as a monomer in an autoinhibited state and phosphorylation disrupts this autoinhibition leading to the liberation of the DNA-binding and dimerization activities and its nuclear localization where it can activate type I IFN and ISG genes. In terms of biological role, key transcriptional regulator of type I interferon (IFN)-dependent immune responses and plays a critical role in the innate immune response against DNA and RNA viruses. Regulates the transcription of type I IFN genes (IFN-alpha and IFN-beta) and IFN-stimulated genes (ISG) by binding to an interferon-stimulated response element (ISRE) in their promoters. Can efficiently activate both the IFN-beta (IFNB) and the IFN-alpha (IFNA) genes and mediate their induction via both the virus-activated, MyD88-independent pathway and the TLR-activated, MyD88-dependent pathway. Induces transcription of ubiquitin hydrolase USP25 mRNA in response to lipopolysaccharide (LPS) or viral infection in a type I IFN-dependent manner. Required during both the early and late phases of the IFN gene induction but is more critical for the late than for the early phase. Exists in an inactive form in the cytoplasm of uninfected cells and following viral infection, double-stranded RNA (dsRNA), or toll-like receptor (TLR) signaling, becomes phosphorylated by IKBKE and TBK1 kinases. This induces a conformational change, leading to its dimerization and nuclear localization where along with other coactivators it can activate transcription of the type I IFN and ISG genes. Can also play a role in regulating adaptive immune responses by inducing PSMB9/LMP2 expression, either directly or through induction of IRF1. Binds to the Q promoter (Qp) of EBV nuclear antigen 1 a (EBNA1) and may play a role in the regulation of EBV latency. Can activate distinct gene expression programs in macrophages and regulate the anti-tumor properties of primary macrophages. The polypeptide is Interferon regulatory factor 7 (Irf7) (Mus musculus (Mouse)).